Here is a 319-residue protein sequence, read N- to C-terminus: 4-hydroxy-3-methylbut-2-enyl diphosphate reductase (319 aa).

A [4Fe-4S] cluster-binding site is contributed by Cys-15. The (2E)-4-hydroxy-3-methylbut-2-enyl diphosphate site is built by His-44 and His-77. Dimethylallyl diphosphate is bound by residues His-44 and His-77. Isopentenyl diphosphate is bound by residues His-44 and His-77. Residue Cys-99 participates in [4Fe-4S] cluster binding. Position 127 (His-127) interacts with (2E)-4-hydroxy-3-methylbut-2-enyl diphosphate. His-127 lines the dimethylallyl diphosphate pocket. Residue His-127 participates in isopentenyl diphosphate binding. Catalysis depends on Glu-129, which acts as the Proton donor. (2E)-4-hydroxy-3-methylbut-2-enyl diphosphate is bound at residue Thr-172. Cys-202 provides a ligand contact to [4Fe-4S] cluster. Ser-230, Ser-231, Asn-232, and Ser-274 together coordinate (2E)-4-hydroxy-3-methylbut-2-enyl diphosphate. Dimethylallyl diphosphate contacts are provided by Ser-230, Ser-231, Asn-232, and Ser-274. Residues Ser-230, Ser-231, Asn-232, and Ser-274 each coordinate isopentenyl diphosphate.

It belongs to the IspH family. The cofactor is [4Fe-4S] cluster.

The catalysed reaction is isopentenyl diphosphate + 2 oxidized [2Fe-2S]-[ferredoxin] + H2O = (2E)-4-hydroxy-3-methylbut-2-enyl diphosphate + 2 reduced [2Fe-2S]-[ferredoxin] + 2 H(+). It carries out the reaction dimethylallyl diphosphate + 2 oxidized [2Fe-2S]-[ferredoxin] + H2O = (2E)-4-hydroxy-3-methylbut-2-enyl diphosphate + 2 reduced [2Fe-2S]-[ferredoxin] + 2 H(+). The protein operates within isoprenoid biosynthesis; dimethylallyl diphosphate biosynthesis; dimethylallyl diphosphate from (2E)-4-hydroxy-3-methylbutenyl diphosphate: step 1/1. It functions in the pathway isoprenoid biosynthesis; isopentenyl diphosphate biosynthesis via DXP pathway; isopentenyl diphosphate from 1-deoxy-D-xylulose 5-phosphate: step 6/6. Functionally, catalyzes the conversion of 1-hydroxy-2-methyl-2-(E)-butenyl 4-diphosphate (HMBPP) into a mixture of isopentenyl diphosphate (IPP) and dimethylallyl diphosphate (DMAPP). Acts in the terminal step of the DOXP/MEP pathway for isoprenoid precursor biosynthesis. The polypeptide is 4-hydroxy-3-methylbut-2-enyl diphosphate reductase (Xanthomonas euvesicatoria pv. vesicatoria (strain 85-10) (Xanthomonas campestris pv. vesicatoria)).